A 491-amino-acid chain; its full sequence is MFAKIALVGRPNVGKSTLFNRLIRSNRAITHDMPGVTRDRMEGIVRGRNKRPFGIIDTGGITLDGHAAVAEGPAGIRGFEAEILRQAEEAIAECVAVCLVVDGREGLLPFDEHLASYLRRTGKPVLVVVNKVDGIEKEDVLTAEFHILGFPVLAVSAEHGHNLRWLESEMRDLLPEEDEDGIDDDAADATAVAIADADAETEDGASASETEEDITEETVEDEPEAPLRLCMLGRPNAGKSSLVNALTGTNRMIVSDVAGTTRDSVDVAFEKDGLSYTFVDTAGVRRRSRITDTVERYSVNSSLKSTTKAHVTLLVLDAVEGITSQDKRLIELLDERKTPFMVLVNKMDLVPAKAREDGKRNFRDLLNFCQHVPLLFVSAKTGYELRSIVPLAARIRRECSVRIPTGQLNRAMEEVITRHQPPVVRRVRPKFYYMTQAESQPPTFVLFVNDADRIQAPYAKYIEKSLRRLFGIEHAPMRVHFRSSHKKNSEK.

Residues 3–178 form the EngA-type G 1 domain; it reads AKIALVGRPN…EMRDLLPEED (176 aa). GTP contacts are provided by residues 9-16, 57-61, and 130-133; these read GRPNVGKS, DTGGI, and NKVD. Residues 198-224 are compositionally biased toward acidic residues; that stretch reads DAETEDGASASETEEDITEETVEDEPE. The disordered stretch occupies residues 198 to 225; sequence DAETEDGASASETEEDITEETVEDEPEA. The region spanning 227-400 is the EngA-type G 2 domain; sequence LRLCMLGRPN…LAARIRRECS (174 aa). Residues 233-240, 280-284, and 345-348 each bind GTP; these read GRPNAGKS, DTAGV, and NKMD. In terms of domain architecture, KH-like spans 401–485; the sequence is VRIPTGQLNR…PMRVHFRSSH (85 aa).

It belongs to the TRAFAC class TrmE-Era-EngA-EngB-Septin-like GTPase superfamily. EngA (Der) GTPase family. Associates with the 50S ribosomal subunit.

In terms of biological role, GTPase that plays an essential role in the late steps of ribosome biogenesis. This is GTPase Der from Nitratidesulfovibrio vulgaris (strain ATCC 29579 / DSM 644 / CCUG 34227 / NCIMB 8303 / VKM B-1760 / Hildenborough) (Desulfovibrio vulgaris).